Here is a 191-residue protein sequence, read N- to C-terminus: Flagellar transcriptional regulator FlhC (191 aa).

4 residues coordinate Zn(2+): cysteine 137, cysteine 140, cysteine 157, and cysteine 160.

The protein belongs to the FlhC family. As to quaternary structure, heterohexamer composed of two FlhC and four FlhD subunits. Each FlhC binds a FlhD dimer, forming a heterotrimer, and a hexamer assembles by dimerization of two heterotrimers. Zn(2+) serves as cofactor.

The protein localises to the cytoplasm. Functionally, functions in complex with FlhD as a master transcriptional regulator that regulates transcription of several flagellar and non-flagellar operons by binding to their promoter region. Activates expression of class 2 flagellar genes, including fliA, which is a flagellum-specific sigma factor that turns on the class 3 genes. Also regulates genes whose products function in a variety of physiological pathways. This is Flagellar transcriptional regulator FlhC from Nitrosomonas eutropha (strain DSM 101675 / C91 / Nm57).